Reading from the N-terminus, the 207-residue chain is Ras-related protein Rab-8A (207 aa).

9 residues coordinate GTP: Ser17, Gly18, Val19, Gly20, Lys21, Thr22, Cys23, Ser39, and Thr40. Thr22 provides a ligand contact to Mg(2+). 2 consecutive short sequence motifs (switch) follow at residues Asp31–Phe45 and Asp63–Gly80. 2 residues coordinate Mg(2+): Thr40 and Asp63. GTP-binding residues include Gly66, Asn121, Lys122, Asp124, Ala152, and Lys153. Cys204 is modified (cysteine methyl ester). A lipid anchor (S-geranylgeranyl cysteine) is attached at Cys204. Positions Val205 to Leu207 are cleaved as a propeptide — removed in mature form.

It belongs to the small GTPase superfamily. Rab family. Mg(2+) serves as cofactor.

It is found in the cell membrane. It localises to the golgi apparatus. The protein resides in the endosome membrane. The protein localises to the recycling endosome membrane. Its subcellular location is the cell projection. It is found in the cilium. It localises to the cytoplasmic vesicle. The protein resides in the phagosome membrane. The protein localises to the cytoplasm. Its subcellular location is the cytoskeleton. It is found in the microtubule organizing center. It localises to the centrosome. The protein resides in the centriole. The protein localises to the cilium basal body. Its subcellular location is the midbody. It carries out the reaction GTP + H2O = GDP + phosphate + H(+). With respect to regulation, regulated by guanine nucleotide exchange factors (GEFs) which promote the exchange of bound GDP for free GTP, GTPase activating proteins (GAPs) which increase the GTP hydrolysis activity, and GDP dissociation inhibitors (GDIs) which inhibit the dissociation of the nucleotide from the GTPase. Activated in response to insulin. Its function is as follows. The small GTPases Rab are key regulators of intracellular membrane trafficking, from the formation of transport vesicles to their fusion with membranes. Rabs cycle between an inactive GDP-bound form and an active GTP-bound form that is able to recruit to membranes different sets of downstream effectors directly responsible for vesicle formation, movement, tethering and fusion. RAB8A is involved in polarized vesicular trafficking and neurotransmitter release. Together with RAB11A, RAB3IP, the exocyst complex, PARD3, PRKCI, ANXA2, CDC42 and DNMBP promotes transcytosis of PODXL to the apical membrane initiation sites (AMIS), apical surface formation and lumenogenesis. Regulates the compacted morphology of the Golgi. Together with MYO5B and RAB11A participates in epithelial cell polarization. Also involved in membrane trafficking to the cilium and ciliogenesis. Together with MICALL2, may also regulate adherens junction assembly. May play a role in insulin-induced transport to the plasma membrane of the glucose transporter GLUT4 and therefore play a role in glucose homeostasis. Involved in autophagy. Participates in the export of a subset of neosynthesized proteins through a Rab8-Rab10-Rab11-dependent endososomal export route. Targeted to and stabilized on stressed lysosomes through LRRK2 phosphorylation. Suppresses stress-induced lysosomal enlargement through EHBP1 and EHNP1L1 effector proteins. This is Ras-related protein Rab-8A (RAB8A) from Gallus gallus (Chicken).